The sequence spans 149 residues: Large ribosomal subunit protein uL13 (149 aa).

It belongs to the universal ribosomal protein uL13 family. As to quaternary structure, part of the 50S ribosomal subunit.

Its function is as follows. This protein is one of the early assembly proteins of the 50S ribosomal subunit, although it is not seen to bind rRNA by itself. It is important during the early stages of 50S assembly. The polypeptide is Large ribosomal subunit protein uL13 (Chlorobium chlorochromatii (strain CaD3)).